The sequence spans 629 residues: (-)-alpha-pinene synthase, chloroplastic (629 aa).

A chloroplast-targeting transit peptide spans 1–48 (MSPVSVISLPSDLCLPTSFIDRSGRELIPLHITIPNVAMRRQGKLMTR). The Mg(2+) site is built by Asp-380, Asp-384, and Asp-532. Positions 380–384 (DDMYD) match the DDXXD motif motif. Position 540 (Ser-540) interacts with K(+).

Belongs to the terpene synthase family. Tpsd subfamily. It depends on Mg(2+) as a cofactor. Mn(2+) is required as a cofactor. The cofactor is K(+).

The protein resides in the plastid. It is found in the chloroplast. It carries out the reaction (2E)-geranyl diphosphate = (1S,5S)-alpha-pinene + diphosphate. It functions in the pathway terpene metabolism; oleoresin biosynthesis. Involved in defensive oleoresin formation in conifers in response to insect attack or other injury. Involved in monoterpene (C10) olefins biosynthesis. Produces mainly (-)-alpha-pinene (79%) and lesser amounts of (-)-beta-pinene (4.2%), nearly racemic mixtures of camphene (2.8% (+)/2.2% (-)) and limonene (2.4% (+)/3.7% (-)), as well as small amounts of (+)-alpha-pinene (3.3%) and (+)-beta-pinene (2.4%). In Pinus taeda (Loblolly pine), this protein is (-)-alpha-pinene synthase, chloroplastic (PT1).